The following is a 110-amino-acid chain: Large ribosomal subunit protein uL22 (110 aa).

This sequence belongs to the universal ribosomal protein uL22 family. Part of the 50S ribosomal subunit.

This protein binds specifically to 23S rRNA; its binding is stimulated by other ribosomal proteins, e.g. L4, L17, and L20. It is important during the early stages of 50S assembly. It makes multiple contacts with different domains of the 23S rRNA in the assembled 50S subunit and ribosome. In terms of biological role, the globular domain of the protein is located near the polypeptide exit tunnel on the outside of the subunit, while an extended beta-hairpin is found that lines the wall of the exit tunnel in the center of the 70S ribosome. This chain is Large ribosomal subunit protein uL22, found in Shewanella amazonensis (strain ATCC BAA-1098 / SB2B).